Consider the following 589-residue polypeptide: Coiled-coil domain-containing protein 22 homolog (589 aa).

Coiled coils occupy residues 287-426 (KTPL…LQTK) and 523-589 (CEEL…TSRQ). The interval 568 to 589 (EMQNESQRLEESIRRMEVTSRQ) is disordered. Positions 574–589 (QRLEESIRRMEVTSRQ) are enriched in basic and acidic residues.

This sequence belongs to the CCDC22 family.

The polypeptide is Coiled-coil domain-containing protein 22 homolog (Aedes aegypti (Yellowfever mosquito)).